Consider the following 93-residue polypeptide: Small ribosomal subunit protein uS19 (93 aa).

It belongs to the universal ribosomal protein uS19 family.

Protein S19 forms a complex with S13 that binds strongly to the 16S ribosomal RNA. The polypeptide is Small ribosomal subunit protein uS19 (Ehrlichia ruminantium (strain Welgevonden)).